The chain runs to 63 residues: Large ribosomal subunit protein bL35 (63 aa).

Belongs to the bacterial ribosomal protein bL35 family.

The chain is Large ribosomal subunit protein bL35 from Thermobifida fusca (strain YX).